Reading from the N-terminus, the 420-residue chain is Pyrophosphate--fructose 6-phosphate 1-phosphotransferase (420 aa).

Diphosphate is bound at residue Gly13. Substrate-binding positions include 142 to 144 (TVD), 190 to 192 (MGR), Glu247, and 297 to 300 (YLQR). Asp144 (proton acceptor) is an active-site residue.

It belongs to the phosphofructokinase type A (PFKA) family. PPi-dependent PFK group II subfamily. Clade 'B2' sub-subfamily. Homodimer. The cofactor is Mg(2+). Requires Co(2+) as cofactor. It depends on Mn(2+) as a cofactor.

It localises to the cytoplasm. It carries out the reaction beta-D-fructose 6-phosphate + diphosphate = beta-D-fructose 1,6-bisphosphate + phosphate + H(+). The protein operates within carbohydrate degradation; glycolysis; D-glyceraldehyde 3-phosphate and glycerone phosphate from D-glucose: step 3/4. Non-allosteric. Its function is as follows. Catalyzes the phosphorylation of D-fructose 6-phosphate, the first committing step of glycolysis. Uses inorganic phosphate (PPi) as phosphoryl donor instead of ATP like common ATP-dependent phosphofructokinases (ATP-PFKs), which renders the reaction reversible, and can thus function both in glycolysis and gluconeogenesis. Consistently, PPi-PFK can replace the enzymes of both the forward (ATP-PFK) and reverse (fructose-bisphosphatase (FBPase)) reactions. The protein is Pyrophosphate--fructose 6-phosphate 1-phosphotransferase of Methylococcus capsulatus (strain ATCC 33009 / NCIMB 11132 / Bath).